Consider the following 2052-residue polypeptide: Unconventional myosin-X (2052 aa).

At Met1 the chain carries N-acetylmethionine. Residues 63–739 form the Myosin motor domain; the sequence is EGVDDMATLT…LEQKLEKRQE (677 aa). Residues Asn104, Tyr113, 160–165, and Asn215 contribute to the ATP site; that span reads GAGKTE. Residues 619 to 641 form an actin-binding region; that stretch reads LHSLMATLSASNPFFVRCIKPNM. IQ domains follow at residues 742–763, 764–787, and 788–817; these read VTRAAMVIRAHVLGYLARKQYK, KVLDCVVIIQKNYRAFLLRRRFLH, and LKKAAVVFQKQLRGQIARRVYRQLLAEKRA. The interval 814-884 is SAH; sequence EKRAEEEKRK…LSRELEKQKE (71 aa). Positions 819 to 843 are disordered; it reads EEKRKREEEEKRKREEEERERERER. Positions 885-935 form a coiled coil; that stretch reads NKQVEEILRLEKEIEDLQRMKERQELSLTEASLQKLQQLRDEELRRLEDEA. A phosphoserine mark is found at Ser963 and Ser966. The disordered stretch occupies residues 964–1093; it reads VGSGCTGEQG…DYDQDDYEDG (130 aa). The segment covering 988–1003 has biased composition (acidic residues); the sequence is PEEEEVDEGFEADDDA. The segment covering 1040-1049 has biased composition (polar residues); it reads VVPTSPSADS. Residues 1081–1092 show a composition bias toward acidic residues; it reads GDYDYDQDDYED. Thr1152 is modified (phosphothreonine). PH domains lie at 1206-1304 and 1386-1491; these read EALK…QVHA and EFIV…NVTD. The MyTH4 domain occupies 1541 to 1689; sequence LPYGDINLNL…PSRDEIEALI (149 aa). Residues 1694–2038 enclose the FERM domain; it reads MTSTVHCHGG…AYISMIVKKR (345 aa).

Belongs to the TRAFAC class myosin-kinesin ATPase superfamily. Myosin family. In terms of assembly, monomer, when in an inactive conformation in the cytosol. Homodimer in its active, membrane-bound conformation; antiparallel coiled coil-mediated dimer formation. Interacts with ECPAS. Interacts with NEO 1. Interacts with VASP. Interacts with DCC and ITGB5; the presence of DCC inhibits ITGB5 binding. Interacts with tubulin; ITGB5 or DCC binding inhibits tubulin binding. Interacts strongly with CALM3 and weakly with CALM, the CALM3 interaction is essential for function in filopodial extension and motility. Interacts with ITGB1, ITGB3 and ITGB5. As to expression, detected in kidney, testis, liver, kidney, cerebellum and brain cortex (at protein level).

The protein localises to the cytoplasm. The protein resides in the cytosol. It is found in the cell projection. It localises to the lamellipodium. Its subcellular location is the ruffle. The protein localises to the cytoskeleton. The protein resides in the filopodium tip. It is found in the cell cortex. It localises to the filopodium membrane. Its function is as follows. Myosins are actin-based motor molecules with ATPase activity. Unconventional myosins serve in intracellular movements. MYO10 binds to actin filaments and actin bundles and functions as a plus end-directed motor. Moves with higher velocity and takes larger steps on actin bundles than on single actin filaments. The tail domain binds to membranous compartments containing phosphatidylinositol 3,4,5-trisphosphate, which are then moved relative to actin filaments. Regulates cell shape, cell spreading and cell adhesion. Stimulates the formation and elongation of filopodia. In hippocampal neurons it induces the formation of dendritic filopodia by trafficking the actin-remodeling protein VASP to the tips of filopodia, where it promotes actin elongation. Plays a role in formation of the podosome belt in osteoclasts. The chain is Unconventional myosin-X (MYO10) from Bos taurus (Bovine).